The chain runs to 128 residues: Type III secretion protein HrcQb (128 aa).

Residues 1-21 show a composition bias toward acidic residues; it reads MSTEDLYQEDVEMLDDYEDPS. The interval 1–57 is disordered; that stretch reads MSTEDLYQEDVEMLDDYEDPSTEQHWSEEDGEPSGYATAEPDDHAAQEEQDEPPALD. Residues 50–128 are hrcQb-C; the sequence is QDEPPALDSL…LQITRLVTRS (79 aa). The segment at 78–81 is dimer-dimer interface; that stretch reads RRLD.

The protein belongs to the FliN/MopA/SpaO family. As to quaternary structure, homotetramer. The four monomers assemble into two tightly bound homodimers. Interacts with HrcQa.

The protein localises to the cytoplasm. In terms of biological role, component of the type III secretion system, which is required for effector protein delivery, parasitism, and pathogenicity. Probably participates in the formation of a C-ring-like assembly along with HrcQa. The sequence is that of Type III secretion protein HrcQb (hrcQb) from Pseudomonas savastanoi pv. phaseolicola (Pseudomonas syringae pv. phaseolicola).